We begin with the raw amino-acid sequence, 487 residues long: MSFTLAIVGRPNVGKSTLFNRLVGKRLALVDDQPGVTRDLREGDARLIDLRFTVIDTAGLEEVTDDSLQGRMRRLTERAVEMADVCLFLIDGRVGVTPSDEVFADILRRKNAHVILGVNKAEGRAGDGGAIEAWSLGLGEPIRLSAEHGEGMDDLYHILRPIAEGFAERAAADAPVVDVDVPEEEADLEADPEAHKPTVKHPLQIAVIGRPNAGKSTLINKIIGEDRLLTGPEAGITRDAISVRSEWHGTPIRIFDTAGMRKKARISDKLEKLSVADGLRAVRFAEVVVVLLDVEIPFEQQDLRIADFAETEGRAVVVAVNKWDLEGEKQEKLAELKEMFERLLPQLRGAPLVTVSAKTGRGLDRLHAAILRAHDIWNRRITTARLNTWLGAMVEAHPPPAPGGRRIKLRYMTQVKTRPPGFVVMCSHPDEMPDSYRRYLVNGLRDHFDMPGTPIRLTMRGQGDKNPFKERKFRTPSRLRKHLGKKD.

EngA-type G domains follow at residues 3-167 (FTLA…EGFA) and 203-378 (LQIA…DIWN). GTP is bound by residues 9 to 16 (GRPNVGKS), 56 to 60 (DTAGL), 119 to 122 (NKAE), 209 to 216 (GRPNAGKS), 256 to 260 (DTAGM), and 321 to 324 (NKWD). The KH-like domain occupies 379-463 (RRITTARLNT…PIRLTMRGQG (85 aa)). Residues 451–487 (PGTPIRLTMRGQGDKNPFKERKFRTPSRLRKHLGKKD) are disordered. The segment covering 471 to 487 (RKFRTPSRLRKHLGKKD) has biased composition (basic residues).

Belongs to the TRAFAC class TrmE-Era-EngA-EngB-Septin-like GTPase superfamily. EngA (Der) GTPase family. As to quaternary structure, associates with the 50S ribosomal subunit.

In terms of biological role, GTPase that plays an essential role in the late steps of ribosome biogenesis. In Cereibacter sphaeroides (strain ATCC 17029 / ATH 2.4.9) (Rhodobacter sphaeroides), this protein is GTPase Der.